The chain runs to 1006 residues: E3 ubiquitin-protein ligase MIB1 (1006 aa).

An MIB/HERC2 1 domain is found at 6–74 (NNRVMVEGVG…AYDLRILDSA (69 aa)). The ZZ-type zinc finger occupies 80–132 (HDGTMCDTCRQQPIIGIRWKCAECTNYDLCTVCYHGDKHHLRHRFYRITTPGS). Zn(2+) is bound by residues Cys85, Cys88, Cys100, Cys103, Cys109, Cys112, His118, and His122. Positions 143-221 (SKKITARGIF…MSDLKCVQDA (79 aa)) constitute an MIB/HERC2 2 domain. Ser408 is modified (phosphoserine). 9 ANK repeats span residues 430–460 (DLNE…DVNG), 463–492 (AGHT…DVEA), 496–525 (DGDR…DLNA), 529–558 (RRQT…HPSL), 562–591 (EGDT…DVTI), 595–627 (NGFN…IVDE), 631–661 (DGYT…NLDI), 665–694 (NQQT…KLDI), and 698–729 (DGDT…KVDA). RING-type zinc fingers lie at residues 819–854 (CMVC…LICK) and 866–901 (CVVC…VQCR). Residues 935 to 962 (QKDKDNTNVNADVQKLQQQLQDIKEQTM) are a coiled coil. The RING-type 3 zinc finger occupies 963–996 (CPVCLDRLKNMIFLCGHGTCQLCGDRMSECPICR).

In terms of assembly, interacts with CEP131 and PCM1. In terms of processing, ubiquitinated; this modification is inhibited in response to cellular stress, such as ultraviolet light (UV) radiation or heat shock. Ubiquitinated; possibly via autoubiquitination. Detected in all tissues tested. Present in embryo, embryonic stem cells, bladder, skeletal muscle, bladder, uterus, testis, stomach, colon, ileum, trachea, lung, aorta, kidney, spleen, liver and vas deferens (at protein level). Highly expressed in testis.

The protein localises to the cytoplasm. It is found in the cytoskeleton. The protein resides in the microtubule organizing center. Its subcellular location is the centrosome. It localises to the centriolar satellite. The protein localises to the cell membrane. The enzyme catalyses S-ubiquitinyl-[E2 ubiquitin-conjugating enzyme]-L-cysteine + [acceptor protein]-L-lysine = [E2 ubiquitin-conjugating enzyme]-L-cysteine + N(6)-ubiquitinyl-[acceptor protein]-L-lysine.. It functions in the pathway protein modification; protein ubiquitination. Functionally, E3 ubiquitin-protein ligase that mediates ubiquitination of Delta receptors, which act as ligands of Notch proteins. Positively regulates the Delta-mediated Notch signaling by ubiquitinating the intracellular domain of Delta, leading to endocytosis of Delta receptors. Involved in ubiquitination of centriolar satellite CEP131, CEP290 and PCM1 proteins and hence inhibits primary cilium formation in proliferating cells. Mediates 'Lys-63'-linked polyubiquitination of TBK1, which probably participates in kinase activation. Probably mediates ubiquitination and subsequent proteasomal degradation of DAPK1, thereby antagonizing anti-apoptotic effects of DAPK1 to promote TNF-induced apoptosis. The polypeptide is E3 ubiquitin-protein ligase MIB1 (Mib1) (Mus musculus (Mouse)).